A 451-amino-acid polypeptide reads, in one-letter code: Chromosomal replication initiator protein DnaA (451 aa).

Residues 1–94 are domain I, interacts with DnaA modulators; the sequence is MKPDLSSLWQ…KPEPKPAQPS (94 aa). Positions 87-106 are disordered; it reads EPKPAQPSALPTHHNKEENK. A domain II region spans residues 95 to 113; sequence ALPTHHNKEENKPQTVIRS. Residues 114 to 331 form a domain III, AAA+ region region; sequence YLNPKHVFEN…GALNRVSANA (218 aa). Positions 159, 161, 162, and 163 each coordinate ATP. Positions 332–451 are domain IV, binds dsDNA; that stretch reads EFMGAAITID…WSNLIRTLSV (120 aa).

Belongs to the DnaA family. Oligomerizes as a right-handed, spiral filament on DNA at oriC.

It is found in the cytoplasm. Its function is as follows. Plays an essential role in the initiation and regulation of chromosomal replication. ATP-DnaA binds to the origin of replication (oriC) to initiate formation of the DNA replication initiation complex once per cell cycle. Binds the DnaA box (a 9 base pair repeat at the origin) and separates the double-stranded (ds)DNA. Forms a right-handed helical filament on oriC DNA; dsDNA binds to the exterior of the filament while single-stranded (ss)DNA is stabiized in the filament's interior. The ATP-DnaA-oriC complex binds and stabilizes one strand of the AT-rich DNA unwinding element (DUE), permitting loading of DNA polymerase. After initiation quickly degrades to an ADP-DnaA complex that is not apt for DNA replication. Binds acidic phospholipids. This Pasteurella multocida (strain Pm70) protein is Chromosomal replication initiator protein DnaA.